The following is a 120-amino-acid chain: Small ribosomal subunit protein uS13 (120 aa).

Positions 92 to 120 (HRKGLPVRGQTTKNNARTRKGKKKTVGSK) are disordered. Basic residues predominate over residues 107 to 120 (ARTRKGKKKTVGSK).

The protein belongs to the universal ribosomal protein uS13 family. As to quaternary structure, part of the 30S ribosomal subunit. Forms a loose heterodimer with protein S19. Forms two bridges to the 50S subunit in the 70S ribosome.

Functionally, located at the top of the head of the 30S subunit, it contacts several helices of the 16S rRNA. In the 70S ribosome it contacts the 23S rRNA (bridge B1a) and protein L5 of the 50S subunit (bridge B1b), connecting the 2 subunits; these bridges are implicated in subunit movement. Contacts the tRNAs in the A and P-sites. The polypeptide is Small ribosomal subunit protein uS13 (Helicobacter hepaticus (strain ATCC 51449 / 3B1)).